The primary structure comprises 319 residues: GCN5-related N-acetyltransferase 5, chloroplastic (319 aa).

A chloroplast-targeting transit peptide spans 1–55 (MAALSISLAFSVDSLKPTQSTKFGFSSSSHRYPLLYSCKSHRSNLRFAFPPSSVS). An N-acetyltransferase domain is found at 109–297 (MWVRVMRHEE…KHLMRKKLLP (189 aa)). Acetyl-CoA contacts are provided by residues 218 to 220 (MTV), 226 to 231 (RRGIGW), 258 to 260 (DEA), and Tyr265. Tyr265 acts as the Proton donor in catalysis.

It belongs to the acetyltransferase family. GNAT subfamily. In terms of assembly, oligomer. Post-translationally, autoacetylated. As to expression, expressed in green tissues.

Its subcellular location is the plastid. The protein localises to the chloroplast. It carries out the reaction an N-terminal L-alpha-aminoacyl-[protein] + acetyl-CoA = N-terminal N(alpha)-acetyl-L-alpha-aminoacyl-[protein] + CoA + H(+). It catalyses the reaction L-lysyl-[protein] + acetyl-CoA = N(6)-acetyl-L-lysyl-[protein] + CoA + H(+). The catalysed reaction is N-terminal L-alanyl-[protein] + acetyl-CoA = N-terminal N(alpha)-acetyl-L-alanyl-[protein] + CoA + H(+). The enzyme catalyses N-terminal L-seryl-[protein] + acetyl-CoA = N-terminal N(alpha)-acetyl-L-seryl-[protein] + CoA + H(+). It carries out the reaction N-terminal L-methionyl-[protein] + acetyl-CoA = N-terminal N(alpha)-acetyl-L-methionyl-[protein] + CoA + H(+). It catalyses the reaction N-terminal L-valyl-[protein] + acetyl-CoA = N-terminal N(alpha)-acetyl-L-valyl-[protein] + CoA + H(+). The catalysed reaction is N-terminal L-threonyl-[protein] + acetyl-CoA = N-terminal N(alpha)-acetyl-L-threonyl-[protein] + CoA + H(+). Its function is as follows. Protein acetyltransferase with dual specificity triggering both N-alpha-acetylation (NTA), with a large spectrum of modified N-termini, including methionine, alanine, serine and to a lower extent threonine and valine as substrates, and epsilon-lysine acetylation (KA). This Arabidopsis thaliana (Mouse-ear cress) protein is GCN5-related N-acetyltransferase 5, chloroplastic.